Reading from the N-terminus, the 482-residue chain is 3-isopropylmalate dehydratase large subunit (482 aa).

[4Fe-4S] cluster contacts are provided by cysteine 353, cysteine 414, and cysteine 417.

Belongs to the aconitase/IPM isomerase family. LeuC type 1 subfamily. As to quaternary structure, heterodimer of LeuC and LeuD. It depends on [4Fe-4S] cluster as a cofactor.

It catalyses the reaction (2R,3S)-3-isopropylmalate = (2S)-2-isopropylmalate. It participates in amino-acid biosynthesis; L-leucine biosynthesis; L-leucine from 3-methyl-2-oxobutanoate: step 2/4. Functionally, catalyzes the isomerization between 2-isopropylmalate and 3-isopropylmalate, via the formation of 2-isopropylmaleate. This Xanthomonas oryzae pv. oryzae (strain MAFF 311018) protein is 3-isopropylmalate dehydratase large subunit.